Reading from the N-terminus, the 360-residue chain is Decorin (360 aa).

The signal sequence occupies residues 1 to 16; that stretch reads MKATIIFLLLAQVSWA. Residues 17–30 constitute a propeptide that is removed on maturation; sequence GPFQQRGLFDFMLE. Residue S34 is glycosylated (O-linked (Xyl...) (glycosaminoglycan) serine). Intrachain disulfides connect C55/C61 and C59/C68. LRR repeat units follow at residues 74-94, 95-118, 119-142, 143-163, 164-187, 188-213, 214-234, 235-258, 259-282, 283-305, 306-335, and 336-360; these read DKVP…NNKI, TEIK…NNKI, SKIS…KNHL, KELP…ENEI, TKVR…TNPL, KSSG…DTNI, TTIP…GNKI, TKVD…FNSI, SAVD…NNKL, IKVP…NNNI, SAVG…SNPV, and QYWE…GNYK. The N-linked (GlcNAc...) asparagine glycan is linked to N212. 2 N-linked (GlcNAc...) asparagine glycosylation sites follow: N263 and N304. A disulfide bridge links C314 with C347.

The protein belongs to the small leucine-rich proteoglycan (SLRP) family. SLRP class I subfamily. As to quaternary structure, binds to type I and type II collagen, fibronectin and TGF-beta. Forms a ternary complex with MFAP2 and ELN. Interacts with DPT. The attached glycosaminoglycan chain can be either chondroitin sulfate or dermatan sulfate depending upon the tissue of origin.

It localises to the secreted. It is found in the extracellular space. The protein localises to the extracellular matrix. May affect the rate of fibrils formation. The sequence is that of Decorin (DCN) from Equus caballus (Horse).